A 131-amino-acid chain; its full sequence is Sirohydrochlorin cobaltochelatase (131 aa).

Catalysis depends on histidine 12, which acts as the Proton acceptor. Residues histidine 12 and histidine 78 each coordinate Co(2+). Residues histidine 12 and histidine 78 each contribute to the Ni(2+) site. 73–78 is a substrate binding site; that stretch reads LASGVH.

This sequence belongs to the CbiX family. CbiXS subfamily. In terms of assembly, homotetramer; dimer of dimers.

It carries out the reaction Co-sirohydrochlorin + 2 H(+) = sirohydrochlorin + Co(2+). The enzyme catalyses Ni-sirohydrochlorin + 2 H(+) = sirohydrochlorin + Ni(2+). The protein operates within cofactor biosynthesis; adenosylcobalamin biosynthesis; cob(II)yrinate a,c-diamide from sirohydrochlorin (anaerobic route): step 1/10. Catalyzes the insertion of Co(2+) into sirohydrochlorin as part of the anaerobic pathway to cobalamin biosynthesis. Involved in the biosynthesis of the unique nickel-containing tetrapyrrole coenzyme F430, the prosthetic group of methyl-coenzyme M reductase (MCR), which plays a key role in methanogenesis and anaerobic methane oxidation. Catalyzes the insertion of Ni(2+) into sirohydrochlorin to yield Ni-sirohydrochlorin. The protein is Sirohydrochlorin cobaltochelatase of Methanococcoides burtonii (strain DSM 6242 / NBRC 107633 / OCM 468 / ACE-M).